The primary structure comprises 298 residues: Golgi to ER traffic protein 2 (298 aa).

At 1 to 164 (MSEPVVDTAE…LEYNTYNQKL (164 aa)) the chain is on the cytoplasmic side. The segment at 40–92 (ILSQGSSVKTSGVKSVLDQEKEATPSHDEDPEIQDITEITTPPPRTPPIGEDA) is disordered. Over residues 42 to 55 (SQGSSVKTSGVKSV) the composition is skewed to low complexity. Positions 56 to 67 (LDQEKEATPSHD) are enriched in basic and acidic residues. Residues 165–185 (WKFRFLLVRVSVTLFNFFYHY) traverse the membrane as a helical segment. The Lumenal portion of the chain corresponds to 186-211 (INLSNFHASNYAYVRDLSSEKYPVRD). Residues 212–231 (FFTWFATTEVVLVAAYYSIF) traverse the membrane as a helical segment. Topologically, residues 232–275 (HSLGLFHAANQNSFVLKAMSMGSMVLPQLEHYKPLVARFLGYYE) are cytoplasmic. Residues 276–296 (LLGIVLGDLSLVIVLFGLLSF) traverse the membrane as a helical segment. Topologically, residues 297 to 298 (AN) are lumenal.

Belongs to the GET2 family. Component of the Golgi to ER traffic (GET) complex, which is composed of GET1, GET2 and GET3. Within the complex, GET1 and GET2 form a heterotetramer which is stabilized by phosphatidylinositol binding and which binds to the GET3 homodimer.

The protein localises to the endoplasmic reticulum membrane. It is found in the golgi apparatus membrane. Its function is as follows. Required for the post-translational delivery of tail-anchored (TA) proteins to the endoplasmic reticulum. Together with GET1, acts as a membrane receptor for soluble GET3, which recognizes and selectively binds the transmembrane domain of TA proteins in the cytosol. The GET complex cooperates with the HDEL receptor ERD2 to mediate the ATP-dependent retrieval of resident ER proteins that contain a C-terminal H-D-E-L retention signal from the Golgi to the ER. In Candida albicans (strain SC5314 / ATCC MYA-2876) (Yeast), this protein is Golgi to ER traffic protein 2.